Consider the following 882-residue polypeptide: Cadherin-1 (882 aa).

A signal peptide spans 1–23; sequence MGPWSRSLSALCCCCRCNPWLCR. Positions 24–154 are excised as a propeptide; sequence EPEPCIPGFG…PHHGLRRQKR (131 aa). The tract at residues 117–137 is disordered; it reads EVSAHHHHHHSHHDSPSGTQT. 5 Cadherin domains span residues 154–262, 263–375, 376–486, 487–595, and 594–702; these read RDWV…KPQF, TQEV…APRF, NPTT…APIF, VPPQ…GPVP, and VPEP…RPAE. Topologically, residues 155–709 are extracellular; that stretch reads DWVIPPISCP…PAEAGLQVPA (555 aa). S280 carries an O-linked (Man...) serine glycan. O-linked (Man...) threonine glycans are attached at residues T285, T358, T470, T472, and T509. The N-linked (GlcNAc...) asparagine glycan is linked to N558. 3 O-linked (Man...) threonine glycosylation sites follow: T576, T578, and T580. The N-linked (GlcNAc...) asparagine glycan is linked to N637. Residues 710–730 traverse the membrane as a helical segment; the sequence is ILGILGGILAFLILILLLLLL. The Cytoplasmic portion of the chain corresponds to 731–882; it reads VRRRRVVKEP…ADMYGGGEDD (152 aa). The disordered stretch occupies residues 747-767; sequence DTRDNVYYYDEEGGGEEDQDF. A phosphotyrosine; by SRC mark is found at Y753, Y754, and Y755. Positions 755-767 are enriched in acidic residues; the sequence is YDEEGGGEEDQDF. Residues 758–769 form a required for binding CTNND1 and PSEN1 region; that stretch reads EGGGEEDQDFDL. Phosphoserine occurs at positions 770, 793, 838, 840, and 846. A required for binding alpha, beta and gamma catenins region spans residues 811 to 882; the sequence is IDENLKAADS…ADMYGGGEDD (72 aa).

As to quaternary structure, homodimer; disulfide-linked. Component of an E-cadherin/ catenin adhesion complex composed of at least E-cadherin/CDH1, beta-catenin/CTNNB1 or gamma-catenin/JUP, and potentially alpha-catenin/CTNNA1; the complex is located to adherens junctions. Found in a complex composed of CDH1, RAP1A and PKP3; PKP3 acts as a scaffold protein within the complex, the complex is required for CDH1 localization to mature desmosome cell junctions. Interacts with the TRPV4 and CTNNB1 complex. Interacts with CTNND1. The stable association of CTNNA1 is controversial as CTNNA1 was shown not to bind to F-actin when assembled in the complex. Alternatively, the CTNNA1-containing complex may be linked to F-actin by other proteins such as LIMA1. Interaction with PSEN1, cleaves CDH1 resulting in the disassociation of cadherin-based adherens junctions (CAJs). Interacts with AJAP1 and DLGAP5. Interacts with TBC1D2. Interacts with CAV1. Interacts with PIP5K1C. Interacts with RAB8B. Interacts with DDR1; this stabilizes CDH1 at the cell surface and inhibits its internalization. Interacts with RAPGEF2. Interacts with KLRG1. Forms a ternary complex composed of ADAM10, CADH1 and EPHA4; within the complex, CADH1 is cleaved by ADAM10 which disrupts adherens junctions. Interacts with SPEF1. Interacts with CTNNB1 and PKP2. Interacts with AMOTL2; the interaction may facilitate binding of radial actin fibers to cell junction complexes. Interacts with DSG3; the interaction is required for CDH1 localization to developing adherens junctions. In terms of processing, during apoptosis or with calcium influx, cleaved by a membrane-bound metalloproteinase (ADAM10), PS1/gamma-secretase and caspase-3. Processing by the metalloproteinase, induced by calcium influx, causes disruption of cell-cell adhesion and the subsequent release of beta-catenin into the cytoplasm. The residual membrane-tethered cleavage product is rapidly degraded via an intracellular proteolytic pathway. Cleavage by caspase-3 releases the cytoplasmic tail resulting in disintegration of the actin microfilament system. The gamma-secretase-mediated cleavage promotes disassembly of adherens junctions. During development of the cochlear organ of Corti, cleavage by ADAM10 at adherens junctions promotes pillar cell separation. Post-translationally, N-glycosylation at Asn-637 is essential for expression, folding and trafficking. Addition of bisecting N-acetylglucosamine by MGAT3 modulates its cell membrane location. Ubiquitinated by a SCF complex containing SKP2, which requires prior phosphorylation by CK1/CSNK1A1. Ubiquitinated by CBLL1/HAKAI, requires prior phosphorylation at Tyr-754. In terms of processing, O-glycosylated. O-manosylated by TMTC1, TMTC2, TMTC3 or TMTC4. Thr-285 and Thr-509 are O-mannosylated by TMTC2 or TMTC4 but not TMTC1 or TMTC3.

Its subcellular location is the cell junction. The protein resides in the adherens junction. It localises to the cell membrane. The protein localises to the endosome. It is found in the golgi apparatus. Its subcellular location is the trans-Golgi network. The protein resides in the cytoplasm. It localises to the desmosome. Its function is as follows. Cadherins are calcium-dependent cell adhesion proteins. They preferentially interact with themselves in a homophilic manner in connecting cells; cadherins may thus contribute to the sorting of heterogeneous cell types. CDH1 is involved in mechanisms regulating cell-cell adhesions, mobility and proliferation of epithelial cells. Promotes organization of radial actin fiber structure and cellular response to contractile forces, via its interaction with AMOTL2 which facilitates anchoring of radial actin fibers to CDH1 junction complexes at the cell membrane. Plays a role in the early stages of desmosome cell-cell junction formation via facilitating the recruitment of DSG2 and DSP to desmosome plaques. Has a potent invasive suppressor role. It is a ligand for integrin alpha-E/beta-7. Functionally, E-Cad/CTF2 promotes non-amyloidogenic degradation of Abeta precursors. Has a strong inhibitory effect on APP C99 and C83 production. The chain is Cadherin-1 (CDH1) from Bos taurus (Bovine).